A 358-amino-acid polypeptide reads, in one-letter code: Holliday junction branch migration complex subunit RuvB (358 aa).

The interval M1–Y183 is large ATPase domain (RuvB-L). Residues L22, R23, G64, K67, T68, T69, E130 to F132, R173, Y183, and R220 each bind ATP. T68 lines the Mg(2+) pocket. Positions S184–E254 are small ATPAse domain (RuvB-S). A head domain (RuvB-H) region spans residues E257–G358. Positions 312 and 317 each coordinate DNA.

It belongs to the RuvB family. As to quaternary structure, homohexamer. Forms an RuvA(8)-RuvB(12)-Holliday junction (HJ) complex. HJ DNA is sandwiched between 2 RuvA tetramers; dsDNA enters through RuvA and exits via RuvB. An RuvB hexamer assembles on each DNA strand where it exits the tetramer. Each RuvB hexamer is contacted by two RuvA subunits (via domain III) on 2 adjacent RuvB subunits; this complex drives branch migration. In the full resolvosome a probable DNA-RuvA(4)-RuvB(12)-RuvC(2) complex forms which resolves the HJ.

It is found in the cytoplasm. The catalysed reaction is ATP + H2O = ADP + phosphate + H(+). In terms of biological role, the RuvA-RuvB-RuvC complex processes Holliday junction (HJ) DNA during genetic recombination and DNA repair, while the RuvA-RuvB complex plays an important role in the rescue of blocked DNA replication forks via replication fork reversal (RFR). RuvA specifically binds to HJ cruciform DNA, conferring on it an open structure. The RuvB hexamer acts as an ATP-dependent pump, pulling dsDNA into and through the RuvAB complex. RuvB forms 2 homohexamers on either side of HJ DNA bound by 1 or 2 RuvA tetramers; 4 subunits per hexamer contact DNA at a time. Coordinated motions by a converter formed by DNA-disengaged RuvB subunits stimulates ATP hydrolysis and nucleotide exchange. Immobilization of the converter enables RuvB to convert the ATP-contained energy into a lever motion, pulling 2 nucleotides of DNA out of the RuvA tetramer per ATP hydrolyzed, thus driving DNA branch migration. The RuvB motors rotate together with the DNA substrate, which together with the progressing nucleotide cycle form the mechanistic basis for DNA recombination by continuous HJ branch migration. Branch migration allows RuvC to scan DNA until it finds its consensus sequence, where it cleaves and resolves cruciform DNA. The protein is Holliday junction branch migration complex subunit RuvB of Paenarthrobacter aurescens (strain TC1).